Consider the following 2481-residue polypeptide: Serine/threonine-protein kinase TOR (2481 aa).

A disordered region spans residues 1–31; it reads MSTSSQSFVAGRPASMASPSQSHRFCGPSAT. HEAT repeat units lie at residues 205–242, 292–329, 373–410, 434–471, 569–607, 608–645, 737–775, and 781–819; these read VHVP…VIEK, SRYR…FLRD, HYLP…AMGS, DALD…SQAK, RLVE…FDDY, LAQA…KNPA, QYIP…STGY, and KEYP…LDPH. Positions 823–847 are disordered; that stretch reads RNQQSLSGSHGEVPRGTGDSGQPIP. HEAT repeat units follow at residues 866–904, 908–945, 952–992, 996–1036, 1037–1075, and 1077–1114; these read YYST…SMGL, PYLP…IVRQ, PELL…ALND, TYLP…GTLD, EHMH…CVQV, and GHIS…ALGE. The tract at residues 1179 to 1204 is disordered; it reads DPFEEGTDRNHQVNDGRLRTAGEASQ. The span at 1184–1198 shows a compositional bias: basic and acidic residues; that stretch reads GTDRNHQVNDGRLRT. The region spanning 1309 to 1887 is the FAT domain; that stretch reads LLGALAEKCR…MYPLLVACKS (579 aa). 2 short sequence motifs (nuclear localization signal) span residues 1505 to 1512 and 2075 to 2080; these read VRRAKYDE and KQRPRK. The PI3K/PI4K catalytic domain occupies 2065 to 2378; it reads FSRQLVVITS…DEDPADIDLP (314 aa). Residues 2071-2077 form a G-loop region; the sequence is VITSKQR. A catalytic loop region spans residues 2244-2252; the sequence is GLGDRHPSN. The activation loop stretch occupies residues 2264 to 2289; sequence HIDFGDCFEASMNREKFPEKVPFRLT. The interval 2354–2384 is disordered; sequence NNNPNAPADVEPDEEDEDPADIDLPQPQRST. The span at 2363–2374 shows a compositional bias: acidic residues; sequence VEPDEEDEDPAD. Ser2424 carries the post-translational modification Phosphoserine. Positions 2449–2481 constitute an FATC domain; sequence HGLSVKVQVQKLINQATSHENLCQNYVGWCPFW.

The protein belongs to the PI3/PI4-kinase family. In terms of assembly, interacts with RAPTOR1 and itself. Interacts with FKBP12 in a rapamycin-dependent manner. Binds to LST8-1. Hyperactivated upon interaction with cauliflower mosaic virus (CaMV) Tav protein. Post-translationally, activated by phosphorylation on Ser-2424 triggered by cauliflower mosaic virus P6 and auxin. Highly expressed in root meristems, shoot apical meristem (SAM) and floral buds.

The protein localises to the cytoplasm. The protein resides in the nucleus. It catalyses the reaction L-seryl-[protein] + ATP = O-phospho-L-seryl-[protein] + ADP + H(+). The catalysed reaction is L-threonyl-[protein] + ATP = O-phospho-L-threonyl-[protein] + ADP + H(+). Its activity is regulated as follows. Almost insensitive to rapamycin. Strongly repressed by specific active site inhibitors (asTORis) such as AZD-8055, TORIN2 and WYE-132, and, to a lesser extent, by KU63794, WYE-354 and TORIN1, leading to impaired photoautotrophic growth and abnormally early meristematic cells differentiation. Repression by TORIN1 leads to impaired responses to auxin, including gravitropism. Combined treatment with rapamycin and active-site inhibitors (e.g. Torin1 and AZD-8055) results in synergistic inhibition of activity and plant growth. Inhibition by KU63794 leads to reduced auxin content in root tips. AZD-8055 treatment reduces abscisic acid (ABA) levels. In addition, inhibition by AZD-8055 leads to a strong reduction of watermelon mosaic virus (WMV) infection. Its function is as follows. Essential cell growth regulator that controls development from early embryo to seed production. Controls plant growth in environmental stress conditions. Acts through the phosphorylation of downstream effectors that are recruited by the binding partner RAPTOR. Acts by activating transcription, protein synthesis and ribosome biogenesis, and inhibiting mRNA degradation and autophagy. Can phosphorylate TAP46, a regulatory subunit of protein phosphatase 2A that modulates cell growth and survival. Involved in modulating the transition from heterotrophic to photoautotrophic growth by regulating the expression of chloroplast- and photosynthesis-associated genes. Essential for auxin signaling transduction, probably acting in polysomes to maintain the active ATPK1/S6K1 (and thus TIF3H1/eIF3h) phosphorylation status that is critical for translation reinitiation (e.g. uORF-mRNAs loading). Promotes abscisic acid (ABA) biosynthesis. Involved in the regulation of sugar-mediated (e.g. glucose and sucrose) glycolysis- and mitochondrial bioenergetics-dependent root growth promotion. Required for sugar (e.g. glucose) promotion of hypocotyl elongation in the dark, by activating the brassinosteroid pathway and stabilizing BZR1. The regulation of BZR1 degradation is dependent on autophagy. Regulates the expression, phosphorylation and ribosome association of MRFs (e.g. MRF1, MRF3 and MRF4), especially under energy-deficient conditions. Functionally, (Microbial infection) Binding to cauliflower mosaic virus (CaMV) Tav protein is critical for both translation reinitiation and viral fitness. When activated by CaMV P6, promotes CaMV translation by inhibiting cellular autophagy and suppressing both silencing and innate immunity, thus conferring sensitivity to P.syringae. In terms of biological role, (Microbial infection) Required during infection by some potyvirus such as Watermelon mosaic virus (WMV) but not for turnip mosaic virus (TuMV). The polypeptide is Serine/threonine-protein kinase TOR (Arabidopsis thaliana (Mouse-ear cress)).